We begin with the raw amino-acid sequence, 286 residues long: Protein METABOLIC NETWORK MODULATOR 1 (286 aa).

Residues 1-10 (MEKESHEENN) show a composition bias toward basic and acidic residues. Disordered stretches follow at residues 1-60 (MEKE…DDEA), 123-146 (VMHHDGSAKRGRKSRFREKRGSGV), and 181-204 (GGERVPIDHSPMQTETGSQASGAS). Positions 20 to 29 (KRKRGRPRKQ) are enriched in basic residues. The segment covering 30 to 39 (LKLESNEHSL) has biased composition (basic and acidic residues). Basic residues predominate over residues 131–140 (KRGRKSRFRE). The span at 191 to 204 (PMQTETGSQASGAS) shows a compositional bias: polar residues.

Mailny observed in young seedlings and in emerging leaves.

In terms of biological role, lineage-specific modulator of primary metabolism. Influences flowering time. The polypeptide is Protein METABOLIC NETWORK MODULATOR 1 (Arabidopsis thaliana (Mouse-ear cress)).